Consider the following 653-residue polypeptide: Mannosyl-oligosaccharide 1,2-alpha-mannosidase IA (653 aa).

Over 1 to 41 (MPVGGLLPLFSSPAGGVLGGGLGGGGGRKGSGPAALRLTEK) the chain is Cytoplasmic. A helical; Signal-anchor for type II membrane protein transmembrane segment spans residues 42–62 (FVLLLVFSAFITLCFGAIFFL). Residues 63 to 653 (PDSSKLLSGV…DKKEVEIREE (591 aa)) lie on the Lumenal side of the membrane. Residues 81–116 (QPAADHKPGPGARAEDAAEGRARRREEGAPGDPEAA) form a disordered region. Basic and acidic residues predominate over residues 84 to 108 (ADHKPGPGARAEDAAEGRARRREEG). Cys-476 and Cys-508 are joined by a disulfide. An N-linked (GlcNAc...) asparagine glycan is attached at Asn-513. Catalysis depends on Glu-522, which acts as the Proton donor.

This sequence belongs to the glycosyl hydrolase 47 family. Ca(2+) serves as cofactor.

It is found in the golgi apparatus membrane. It catalyses the reaction N(4)-(alpha-D-Man-(1-&gt;2)-alpha-D-Man-(1-&gt;2)-alpha-D-Man-(1-&gt;3)-[alpha-D-Man-(1-&gt;2)-alpha-D-Man-(1-&gt;3)-[alpha-D-Man-(1-&gt;2)-alpha-D-Man-(1-&gt;6)]-alpha-D-Man-(1-&gt;6)]-beta-D-Man-(1-&gt;4)-beta-D-GlcNAc-(1-&gt;4)-beta-D-GlcNAc)-L-asparaginyl-[protein] (N-glucan mannose isomer 9A1,2,3B1,2,3) + 4 H2O = N(4)-(alpha-D-Man-(1-&gt;3)-[alpha-D-Man-(1-&gt;3)-[alpha-D-Man-(1-&gt;6)]-alpha-D-Man-(1-&gt;6)]-beta-D-Man-(1-&gt;4)-beta-D-GlcNAc-(1-&gt;4)-beta-D-GlcNAc)-L-asparaginyl-[protein] (N-glucan mannose isomer 5A1,2) + 4 beta-D-mannose. The catalysed reaction is N(4)-(alpha-D-Man-(1-&gt;2)-alpha-D-Man-(1-&gt;2)-alpha-D-Man-(1-&gt;3)-[alpha-D-Man-(1-&gt;3)-[alpha-D-Man-(1-&gt;2)-alpha-D-Man-(1-&gt;6)]-alpha-D-Man-(1-&gt;6)]-beta-D-Man-(1-&gt;4)-beta-D-GlcNAc-(1-&gt;4)-beta-D-GlcNAc)-L-asparaginyl-[protein] (N-glucan mannose isomer 8A1,2,3B1,3) + 3 H2O = N(4)-(alpha-D-Man-(1-&gt;3)-[alpha-D-Man-(1-&gt;3)-[alpha-D-Man-(1-&gt;6)]-alpha-D-Man-(1-&gt;6)]-beta-D-Man-(1-&gt;4)-beta-D-GlcNAc-(1-&gt;4)-beta-D-GlcNAc)-L-asparaginyl-[protein] (N-glucan mannose isomer 5A1,2) + 3 beta-D-mannose. Its pathway is protein modification; protein glycosylation. Its activity is regulated as follows. Inhibited by both 1-deoxymannojirimycin and kifunensine. In terms of biological role, involved in the maturation of Asn-linked oligosaccharides. Progressively trim alpha-1,2-linked mannose residues from Man(9)GlcNAc(2) to produce Man(5)GlcNAc(2). The protein is Mannosyl-oligosaccharide 1,2-alpha-mannosidase IA (MAN1A1) of Homo sapiens (Human).